Consider the following 462-residue polypeptide: Kinetochore protein nsk1 (462 aa).

The segment covering 104–120 (PSKNHETSLSPSKSTID) has biased composition (polar residues). Disordered stretches follow at residues 104 to 161 (PSKN…CPGI), 180 to 240 (EKYG…PLRT), and 320 to 462 (NQLF…NIQS). Basic and acidic residues predominate over residues 121–138 (NNERKLDNEIDNYKHDVK). The segment covering 146-156 (GKTSNPSQGTT) has biased composition (polar residues). A compositionally biased stretch (basic and acidic residues) spans 180–189 (EKYGKTDLGK). A compositionally biased stretch (polar residues) spans 229-240 (KNRSSTFSPLRT). Residues 324-333 (KSEEEKDPVG) are compositionally biased toward basic and acidic residues. Over residues 422 to 444 (WPQNLAKNNINSEPNTPTKSNID) the composition is skewed to polar residues. The segment covering 449–462 (HSARAHKTRKNIQS) has biased composition (basic residues).

In terms of assembly, interacts with dlc1. The dlc1-nsk1 complex seems to oligomerize in chain-like structures. Also binds directly to spindle microtubules. In terms of processing, phosphorylated by cdk1 at prometaphase arrest. Phosphorylation prevents nsk1 kinetochore and spindle targeting. Dephosphorylated by clp1 at anaphase onset controls its relocalization.

It is found in the nucleus. The protein resides in the nucleolus. It localises to the cytoplasm. The protein localises to the cytoskeleton. Its subcellular location is the spindle. It is found in the chromosome. The protein resides in the centromere. It localises to the kinetochore. Its function is as follows. Ensures chromosome alignment and accurate chromosome segregation during mitosis. Promotes proper kinetochore-microtubule (k-MT) interactions during anaphase B. The phosphorylation status of nsk1 affects the proper k-MT coupling, ensuring that it interacts stably only at the correct time during mitosis. In Schizosaccharomyces pombe (strain 972 / ATCC 24843) (Fission yeast), this protein is Kinetochore protein nsk1 (nsk1).